We begin with the raw amino-acid sequence, 332 residues long: DNA-directed RNA polymerase subunit alpha (332 aa).

The alpha N-terminal domain (alpha-NTD) stretch occupies residues 1–226 (MLIAQRPTLT…ELFGLARELN (226 aa)). The tract at residues 243-332 (LSSELSMPIE…GYDEDESTTI (90 aa)) is alpha C-terminal domain (alpha-CTD).

The protein belongs to the RNA polymerase alpha chain family. As to quaternary structure, homodimer. The RNAP catalytic core consists of 2 alpha, 1 beta, 1 beta' and 1 omega subunit. When a sigma factor is associated with the core the holoenzyme is formed, which can initiate transcription.

It catalyses the reaction RNA(n) + a ribonucleoside 5'-triphosphate = RNA(n+1) + diphosphate. DNA-dependent RNA polymerase catalyzes the transcription of DNA into RNA using the four ribonucleoside triphosphates as substrates. The polypeptide is DNA-directed RNA polymerase subunit alpha (Leifsonia xyli subsp. xyli (strain CTCB07)).